A 572-amino-acid chain; its full sequence is 2-succinyl-5-enolpyruvyl-6-hydroxy-3-cyclohexene-1-carboxylate synthase (572 aa).

The protein belongs to the TPP enzyme family. MenD subfamily. Homodimer. Mg(2+) is required as a cofactor. Mn(2+) serves as cofactor. Requires thiamine diphosphate as cofactor.

The enzyme catalyses isochorismate + 2-oxoglutarate + H(+) = 5-enolpyruvoyl-6-hydroxy-2-succinyl-cyclohex-3-ene-1-carboxylate + CO2. It functions in the pathway quinol/quinone metabolism; 1,4-dihydroxy-2-naphthoate biosynthesis; 1,4-dihydroxy-2-naphthoate from chorismate: step 2/7. Its pathway is quinol/quinone metabolism; menaquinone biosynthesis. Functionally, catalyzes the thiamine diphosphate-dependent decarboxylation of 2-oxoglutarate and the subsequent addition of the resulting succinic semialdehyde-thiamine pyrophosphate anion to isochorismate to yield 2-succinyl-5-enolpyruvyl-6-hydroxy-3-cyclohexene-1-carboxylate (SEPHCHC). This is 2-succinyl-5-enolpyruvyl-6-hydroxy-3-cyclohexene-1-carboxylate synthase from Aeromonas salmonicida (strain A449).